Reading from the N-terminus, the 119-residue chain is Large ribosomal subunit protein bL20 (119 aa).

The protein belongs to the bacterial ribosomal protein bL20 family.

Functionally, binds directly to 23S ribosomal RNA and is necessary for the in vitro assembly process of the 50S ribosomal subunit. It is not involved in the protein synthesizing functions of that subunit. The chain is Large ribosomal subunit protein bL20 from Levilactobacillus brevis (strain ATCC 367 / BCRC 12310 / CIP 105137 / JCM 1170 / LMG 11437 / NCIMB 947 / NCTC 947) (Lactobacillus brevis).